The sequence spans 329 residues: Vacuolar protein sorting-associated protein 26B-like (329 aa).

Belongs to the VPS26 family.

The protein localises to the cytoplasm. The protein resides in the membrane. In terms of biological role, probable component of the retromer complex, a complex required to retrieve lysosomal enzyme receptors (IGF2R and M6PR) from endosomes to the trans-Golgi network. The polypeptide is Vacuolar protein sorting-associated protein 26B-like (vps26bl) (Danio rerio (Zebrafish)).